Consider the following 312-residue polypeptide: Pectinesterase inhibitor 10 (312 aa).

A signal peptide spans 1–25; that stretch reads MNILSQTQILHLSIAILLFITTSSS. Low complexity-rich tracts occupy residues 24-36 and 44-55; these read SSSLSPSSSSPSL and SPSSAPPSSLSP. The tract at residues 24-141 is disordered; sequence SSSLSPSSSS…PSSSSSTYSN (118 aa). Residues 56-75 are compositionally biased toward pro residues; it reads SSPPPLSLSPSSPPPPPPSS. 2 stretches are compositionally biased toward low complexity: residues 76 to 85 and 93 to 104; these read SPLSSLSPSL and SPSSAPPSSLSP. Positions 105 to 124 are enriched in pro residues; sequence SSPPPLSLSPSSPPPPPPSS. Residues 125–137 show a composition bias toward low complexity; the sequence is SPLSSLSPSSSSS. N-linked (GlcNAc...) asparagine glycans are attached at residues Asn-141, Asn-153, Asn-185, and Asn-200. A disulfide bridge connects residues Cys-152 and Cys-161. Cys-218 and Cys-268 form a disulfide bridge.

Belongs to the PMEI family.

It localises to the secreted. Its subcellular location is the extracellular space. It is found in the apoplast. Pectin methylesterase (PME) inhibitor involved in the maintenance of cell wall integrity in response to necrotrophic pathogens. Modulates PME activity and pectin methylesterification during infection by Botrytis cinerea and contributes to resistance against the pathogen. This Arabidopsis thaliana (Mouse-ear cress) protein is Pectinesterase inhibitor 10.